The primary structure comprises 264 residues: tRNA (guanine-N(1)-)-methyltransferase (264 aa).

S-adenosyl-L-methionine-binding positions include G125 and 145–150 (LGDFVL).

Belongs to the RNA methyltransferase TrmD family. In terms of assembly, homodimer.

The protein localises to the cytoplasm. The catalysed reaction is guanosine(37) in tRNA + S-adenosyl-L-methionine = N(1)-methylguanosine(37) in tRNA + S-adenosyl-L-homocysteine + H(+). Its function is as follows. Specifically methylates guanosine-37 in various tRNAs. The polypeptide is tRNA (guanine-N(1)-)-methyltransferase (Burkholderia ambifaria (strain ATCC BAA-244 / DSM 16087 / CCUG 44356 / LMG 19182 / AMMD) (Burkholderia cepacia (strain AMMD))).